The chain runs to 539 residues: Putative S-adenosyl-L-methionine-dependent methyltransferase MAP_4079 (539 aa).

S-adenosyl-L-methionine-binding positions include Asp134 and 163–164; that span reads DL. The tract at residues 290–392 is disordered; that stretch reads AGYGRGRRRP…RGEPGERGGQ (103 aa). The span at 301–313 shows a compositional bias: polar residues; it reads SATSCRGTCSSPR. Gly residues predominate over residues 341 to 351; it reads HGFGNQCGGPD.

This sequence belongs to the UPF0677 family.

Exhibits S-adenosyl-L-methionine-dependent methyltransferase activity. The protein is Putative S-adenosyl-L-methionine-dependent methyltransferase MAP_4079 of Mycolicibacterium paratuberculosis (strain ATCC BAA-968 / K-10) (Mycobacterium paratuberculosis).